The following is a 372-amino-acid chain: Erythronate-4-phosphate dehydrogenase (372 aa).

Residues S45 and T66 each coordinate substrate. D146 contacts NAD(+). The active site involves R209. NAD(+) is bound at residue D233. The active site involves E238. Residue H255 is the Proton donor of the active site. Position 258 (G258) interacts with NAD(+). Y259 contacts substrate.

It belongs to the D-isomer specific 2-hydroxyacid dehydrogenase family. PdxB subfamily. Homodimer.

The protein resides in the cytoplasm. The catalysed reaction is 4-phospho-D-erythronate + NAD(+) = (R)-3-hydroxy-2-oxo-4-phosphooxybutanoate + NADH + H(+). Its pathway is cofactor biosynthesis; pyridoxine 5'-phosphate biosynthesis; pyridoxine 5'-phosphate from D-erythrose 4-phosphate: step 2/5. Catalyzes the oxidation of erythronate-4-phosphate to 3-hydroxy-2-oxo-4-phosphonooxybutanoate. The protein is Erythronate-4-phosphate dehydrogenase of Blochmanniella floridana.